The sequence spans 301 residues: MPSNSASERSTTIPDRTPGELVVVTGMTGAGRSTAAKELEDLGYYVVDNLPPSLLRDVVRLVDETRGTAQPIAVVVDVRSGSFFQTLQANLAQGATGRHATLVFLEADDDVLVRRQEAARRPHPLQGGGRLIDGLVRERGVLADLRGDADLVIDTTGLNVHQLTDRIADAFGTPDTVRLKVTVISFGFKYGIPVDADFVADMRFLPNPHWIPELRPRTGRDAAVADYVMAQPAAAEFLDAYVPVLEGVASGYLREGKRFMTIAIGCTGGKHRSVAMTEEISRRLGEAGYETRSTHRDLGRE.

ATP is bound at residue 26-33 (GMTGAGRS). 77 to 80 (DVRS) is a binding site for GTP.

The protein belongs to the RapZ-like family.

Functionally, displays ATPase and GTPase activities. The polypeptide is Nucleotide-binding protein Noca_2527 (Nocardioides sp. (strain ATCC BAA-499 / JS614)).